The following is a 176-amino-acid chain: Peptide methionine sulfoxide reductase MsrA (176 aa).

The active site involves Cys14.

It belongs to the MsrA Met sulfoxide reductase family.

It carries out the reaction L-methionyl-[protein] + [thioredoxin]-disulfide + H2O = L-methionyl-(S)-S-oxide-[protein] + [thioredoxin]-dithiol. The enzyme catalyses [thioredoxin]-disulfide + L-methionine + H2O = L-methionine (S)-S-oxide + [thioredoxin]-dithiol. Has an important function as a repair enzyme for proteins that have been inactivated by oxidation. Catalyzes the reversible oxidation-reduction of methionine sulfoxide in proteins to methionine. This is Peptide methionine sulfoxide reductase MsrA from Halalkalibacterium halodurans (strain ATCC BAA-125 / DSM 18197 / FERM 7344 / JCM 9153 / C-125) (Bacillus halodurans).